The chain runs to 179 residues: UPF0227 protein Sbal_2415 (179 aa).

This sequence belongs to the UPF0227 family.

The sequence is that of UPF0227 protein Sbal_2415 from Shewanella baltica (strain OS155 / ATCC BAA-1091).